We begin with the raw amino-acid sequence, 138 residues long: Small ribosomal subunit protein bS18m (138 aa).

The protein belongs to the bacterial ribosomal protein bS18 family. As to quaternary structure, component of the mitochondrial small ribosomal subunit. Mature mitochondrial ribosomes consist of a small (37S) and a large (54S) subunit. The 37S subunit contains at least 33 different proteins and 1 molecule of RNA (15S). The 54S subunit contains at least 45 different proteins and 1 molecule of RNA (21S).

It is found in the mitochondrion. This is Small ribosomal subunit protein bS18m (RSM18) from Saccharomyces cerevisiae (strain RM11-1a) (Baker's yeast).